The primary structure comprises 297 residues: uncharacterized protein (297 aa).

The tract at residues 1–44 (MQKSKSIFIPKAFAPQQQAQAPPSKLDNKDPSVEGEGASKPKDD) is disordered. Over residues 10 to 23 (PKAFAPQQQAQAPP) the composition is skewed to low complexity. Positions 26–44 (LDNKDPSVEGEGASKPKDD) are enriched in basic and acidic residues.

This is an uncharacterized protein from Invertebrate iridescent virus 3 (IIV-3).